Consider the following 365-residue polypeptide: tRNA(Met) cytidine acetate ligase (365 aa).

Residues 7-20 (IAEFNPFHNGHKYL), Gly-96, Asn-152, and Arg-175 contribute to the ATP site.

This sequence belongs to the TmcAL family.

Its subcellular location is the cytoplasm. It catalyses the reaction cytidine(34) in elongator tRNA(Met) + acetate + ATP = N(4)-acetylcytidine(34) in elongator tRNA(Met) + AMP + diphosphate. Its function is as follows. Catalyzes the formation of N(4)-acetylcytidine (ac(4)C) at the wobble position of elongator tRNA(Met), using acetate and ATP as substrates. First activates an acetate ion to form acetyladenylate (Ac-AMP) and then transfers the acetyl group to tRNA to form ac(4)C34. The protein is tRNA(Met) cytidine acetate ligase of Streptococcus pneumoniae (strain P1031).